Reading from the N-terminus, the 156-residue chain is Ribosomal RNA large subunit methyltransferase H (156 aa).

Residues L73, G104, and 123–128 contribute to the S-adenosyl-L-methionine site; that span reads LSPLTL.

This sequence belongs to the RNA methyltransferase RlmH family. Homodimer.

The protein localises to the cytoplasm. It catalyses the reaction pseudouridine(1915) in 23S rRNA + S-adenosyl-L-methionine = N(3)-methylpseudouridine(1915) in 23S rRNA + S-adenosyl-L-homocysteine + H(+). Specifically methylates the pseudouridine at position 1915 (m3Psi1915) in 23S rRNA. This chain is Ribosomal RNA large subunit methyltransferase H, found in Aliivibrio salmonicida (strain LFI1238) (Vibrio salmonicida (strain LFI1238)).